A 520-amino-acid polypeptide reads, in one-letter code: Amine oxidase [flavin-containing] B (520 aa).

Serine 2 is modified (N-acetylserine). Over 2-489 the chain is Cytoplasmic; it reads SSKCDVVVVG…TFLERHLPSV (488 aa). Lysine 52 carries the post-translational modification N6-acetyllysine. Residue cysteine 397 is modified to S-8alpha-FAD cysteine. A helical; Anchor for type IV membrane protein membrane pass occupies residues 490-516; it reads PGLLRLIGLTAIFSATALGYLAHKRGL. At 517 to 520 the chain is on the mitochondrial intermembrane side; it reads LVRV.

The protein belongs to the flavin monoamine oxidase family. In terms of assembly, monomer, homo- or heterodimer (containing two subunits of similar size). Each subunit contains a covalently bound flavin. Enzymatically active as monomer. FAD serves as cofactor.

Its subcellular location is the mitochondrion outer membrane. It carries out the reaction a secondary aliphatic amine + O2 + H2O = a primary amine + an aldehyde + H2O2. The catalysed reaction is (R)-adrenaline + O2 + H2O = (R)-3,4-dihydroxymandelaldehyde + methylamine + H2O2. It catalyses the reaction a primary methyl amine + O2 + H2O = an aldehyde + H2O2 + NH4(+). The enzyme catalyses benzylamine + O2 + H2O = benzaldehyde + H2O2 + NH4(+). It carries out the reaction dopamine + O2 + H2O = 3,4-dihydroxyphenylacetaldehyde + H2O2 + NH4(+). The catalysed reaction is tyramine + O2 + H2O = (4-hydroxyphenyl)acetaldehyde + H2O2 + NH4(+). It catalyses the reaction (R)-noradrenaline + O2 + H2O = (R)-3,4-dihydroxymandelaldehyde + H2O2 + NH4(+). The enzyme catalyses 2-phenylethylamine + O2 + H2O = 2-phenylacetaldehyde + H2O2 + NH4(+). It carries out the reaction N-acetylputrescine + O2 + H2O = 4-acetamidobutanal + H2O2 + NH4(+). Functionally, catalyzes the oxidative deamination of primary and some secondary amines such as neurotransmitters, and exogenous amines including the tertiary amine, neurotoxin 1-methyl-4-phenyl-1,2,3,6-tetrahydropyridine (MPTP), with concomitant reduction of oxygen to hydrogen peroxide and participates in the metabolism of neuroactive and vasoactive amines in the central nervous system and peripheral tissues. Preferentially degrades benzylamine and phenylethylamine. The chain is Amine oxidase [flavin-containing] B from Sus scrofa (Pig).